A 113-amino-acid polypeptide reads, in one-letter code: Integration host factor subunit alpha (113 aa).

The tract at residues 59–80 (GNFQVRDKPPRPGRNPKTGETI) is disordered.

This sequence belongs to the bacterial histone-like protein family. As to quaternary structure, heterodimer of an alpha and a beta chain.

This protein is one of the two subunits of integration host factor, a specific DNA-binding protein that functions in genetic recombination as well as in transcriptional and translational control. The chain is Integration host factor subunit alpha from Bordetella bronchiseptica (strain ATCC BAA-588 / NCTC 13252 / RB50) (Alcaligenes bronchisepticus).